The primary structure comprises 211 residues: Uridine kinase (211 aa).

Residue 15 to 22 participates in ATP binding; the sequence is GGSGSGKT.

This sequence belongs to the uridine kinase family.

It is found in the cytoplasm. The catalysed reaction is uridine + ATP = UMP + ADP + H(+). It catalyses the reaction cytidine + ATP = CMP + ADP + H(+). Its pathway is pyrimidine metabolism; CTP biosynthesis via salvage pathway; CTP from cytidine: step 1/3. It participates in pyrimidine metabolism; UMP biosynthesis via salvage pathway; UMP from uridine: step 1/1. The sequence is that of Uridine kinase from Latilactobacillus sakei subsp. sakei (strain 23K) (Lactobacillus sakei subsp. sakei).